The sequence spans 237 residues: MARKPTPPGTPQPTSVGHIVDLVRGAVPPLHPAGLPFVLAPLGVAVLGRNRKWVRRGALTSAAACAAFFRHPHRVPPNRVGVAVAPADGEVALVDSAVPPSELDMGTEPLPRVSIFLSVLDVHVQRSPVGGEVTKVVHRSGQFLSADLADASEVNERNSMLLHTAEGHDVAVIQIAGLLARRIVCDAKVGDTLPIGDTYGLIRFGSRVDTYFPAGTTLLAERGQRTIGAETVIAQLP.

Ser206 acts as the Schiff-base intermediate with substrate; via pyruvic acid in catalysis. Ser206 bears the Pyruvic acid (Ser); by autocatalysis mark.

The protein belongs to the phosphatidylserine decarboxylase family. PSD-A subfamily. As to quaternary structure, heterodimer of a large membrane-associated beta subunit and a small pyruvoyl-containing alpha subunit. Requires pyruvate as cofactor. Post-translationally, is synthesized initially as an inactive proenzyme. Formation of the active enzyme involves a self-maturation process in which the active site pyruvoyl group is generated from an internal serine residue via an autocatalytic post-translational modification. Two non-identical subunits are generated from the proenzyme in this reaction, and the pyruvate is formed at the N-terminus of the alpha chain, which is derived from the carboxyl end of the proenzyme. The post-translation cleavage follows an unusual pathway, termed non-hydrolytic serinolysis, in which the side chain hydroxyl group of the serine supplies its oxygen atom to form the C-terminus of the beta chain, while the remainder of the serine residue undergoes an oxidative deamination to produce ammonia and the pyruvoyl prosthetic group on the alpha chain.

Its subcellular location is the cell membrane. The enzyme catalyses a 1,2-diacyl-sn-glycero-3-phospho-L-serine + H(+) = a 1,2-diacyl-sn-glycero-3-phosphoethanolamine + CO2. The protein operates within phospholipid metabolism; phosphatidylethanolamine biosynthesis; phosphatidylethanolamine from CDP-diacylglycerol: step 2/2. Catalyzes the formation of phosphatidylethanolamine (PtdEtn) from phosphatidylserine (PtdSer). The sequence is that of Phosphatidylserine decarboxylase proenzyme from Rhodococcus opacus (strain B4).